The primary structure comprises 165 residues: Small ribosomal subunit protein uS5 (165 aa).

The 64-residue stretch at 13–76 (LEEKVLVVNR…DAARKNLVSI (64 aa)) folds into the S5 DRBM domain.

The protein belongs to the universal ribosomal protein uS5 family. As to quaternary structure, part of the 30S ribosomal subunit. Contacts proteins S4 and S8.

In terms of biological role, with S4 and S12 plays an important role in translational accuracy. Located at the back of the 30S subunit body where it stabilizes the conformation of the head with respect to the body. The chain is Small ribosomal subunit protein uS5 from Chlamydia muridarum (strain MoPn / Nigg).